Reading from the N-terminus, the 264-residue chain is Low molecular mass lipoprotein PBMHPC-23 (264 aa).

The N-terminal stretch at 1-23 is a signal peptide; it reads MKFLVVFAVVRACVTPACAEMSA.

The protein belongs to the 30 kDa lipoprotein family.

It localises to the secreted. The sequence is that of Low molecular mass lipoprotein PBMHPC-23 from Bombyx mori (Silk moth).